The following is a 402-amino-acid chain: E3 ubiquitin-protein ligase MARCHF11 (402 aa).

The segment covering 1–11 (MSFEGGHGGSR) has biased composition (gly residues). A disordered region spans residues 1 to 161 (MSFEGGHGGS…SGGGDQRAGH (161 aa)). Residues 21–56 (EPPPQPPPPPPPTPPPGEPAPVPAAPRYLPPLPASP) show a composition bias toward pro residues. A compositionally biased stretch (low complexity) spans 111-124 (EAAAAKGGPGESEA). The RING-CH-type zinc finger occupies 162 to 222 (QHQHHQPICK…ELCCYRYHVI (61 aa)). Zn(2+) is bound by residues cysteine 170, cysteine 173, cysteine 186, cysteine 188, histidine 196, cysteine 199, cysteine 212, and cysteine 215. 2 consecutive transmembrane segments (helical) span residues 245 to 265 (MIAV…LLWS) and 278 to 298 (ILFQ…IGLI). Positions 371–374 (YVLL) match the YXXL motif motif. A PDZ-binding motif is present at residues 399–402 (VTSV).

Interacts (YXXL motif) with AP1M1. Interacts (via PDZ-binding motif) with LIN7A. Interacts with unidentified fucose glycoproteins.

It localises to the cytoplasmic vesicle membrane. The catalysed reaction is S-ubiquitinyl-[E2 ubiquitin-conjugating enzyme]-L-cysteine + [acceptor protein]-L-lysine = [E2 ubiquitin-conjugating enzyme]-L-cysteine + N(6)-ubiquitinyl-[acceptor protein]-L-lysine.. Its pathway is protein modification; protein ubiquitination. Its function is as follows. E3 ubiquitin-protein ligase that mediates polyubiquitination of CD4. E3 ubiquitin ligases accept ubiquitin from an E2 ubiquitin-conjugating enzyme in the form of a thioester and then directly transfer the ubiquitin to targeted substrates. May play a role in ubuquitin-dependent protein sorting in developmenting spermatids. The chain is E3 ubiquitin-protein ligase MARCHF11 from Homo sapiens (Human).